The following is a 430-amino-acid chain: Glutamate-1-semialdehyde 2,1-aminomutase (430 aa).

N6-(pyridoxal phosphate)lysine is present on Lys-265.

This sequence belongs to the class-III pyridoxal-phosphate-dependent aminotransferase family. HemL subfamily. In terms of assembly, homodimer. Requires pyridoxal 5'-phosphate as cofactor.

The protein localises to the cytoplasm. The enzyme catalyses (S)-4-amino-5-oxopentanoate = 5-aminolevulinate. It participates in porphyrin-containing compound metabolism; protoporphyrin-IX biosynthesis; 5-aminolevulinate from L-glutamyl-tRNA(Glu): step 2/2. The chain is Glutamate-1-semialdehyde 2,1-aminomutase (hemL) from Helicobacter pylori (strain ATCC 700392 / 26695) (Campylobacter pylori).